Here is a 303-residue protein sequence, read N- to C-terminus: Putative S-adenosyl-L-methionine-dependent methyltransferase SCO6443 (303 aa).

Residues D130 and 159-160 (DL) each bind S-adenosyl-L-methionine.

This sequence belongs to the UPF0677 family.

Exhibits S-adenosyl-L-methionine-dependent methyltransferase activity. This Streptomyces coelicolor (strain ATCC BAA-471 / A3(2) / M145) protein is Putative S-adenosyl-L-methionine-dependent methyltransferase SCO6443.